A 300-amino-acid polypeptide reads, in one-letter code: Acetylglutamate kinase (300 aa).

Substrate is bound by residues glycine 72–glycine 73, arginine 94, and asparagine 197.

It belongs to the acetylglutamate kinase family. ArgB subfamily.

The protein resides in the cytoplasm. It carries out the reaction N-acetyl-L-glutamate + ATP = N-acetyl-L-glutamyl 5-phosphate + ADP. It participates in amino-acid biosynthesis; L-arginine biosynthesis; N(2)-acetyl-L-ornithine from L-glutamate: step 2/4. Functionally, catalyzes the ATP-dependent phosphorylation of N-acetyl-L-glutamate. The sequence is that of Acetylglutamate kinase from Aromatoleum aromaticum (strain DSM 19018 / LMG 30748 / EbN1) (Azoarcus sp. (strain EbN1)).